Reading from the N-terminus, the 209-residue chain is Virulence factors putative positive transcription regulator BvgA (209 aa).

The 116-residue stretch at 4-119 (KVLIIDDHPV…EVINAAKAVM (116 aa)) folds into the Response regulatory domain. Asp-54 is modified (4-aspartylphosphate). In terms of domain architecture, HTH luxR-type spans 142 to 207 (DSTLISVLSN…ELIDLAKRNN (66 aa)). Residues 166 to 185 (NKDIADSMFLSNKTVSTYKT) constitute a DNA-binding region (H-T-H motif).

As to quaternary structure, homodimer. Phosphorylated by BvgS.

Functionally, member of the two-component regulatory system BvgS/BvgA. Activates the transcription of virulence genes. The chain is Virulence factors putative positive transcription regulator BvgA (bvgA) from Bordetella bronchiseptica (strain ATCC BAA-588 / NCTC 13252 / RB50) (Alcaligenes bronchisepticus).